A 295-amino-acid polypeptide reads, in one-letter code: Protoheme IX farnesyltransferase 2 (295 aa).

Helical transmembrane passes span 9–29 (ITKP…FFLA), 36–56 (FALF…GCVF), 83–103 (LTLA…LLYV), 108–128 (LAAF…SLWL), 135–155 (GTLV…CAVS), 163–183 (VTLL…IAIF), 209–229 (IVLY…GGYA), 230–250 (GLGY…MAWG), and 264–284 (VFGF…VDSQ).

The protein belongs to the UbiA prenyltransferase family. Protoheme IX farnesyltransferase subfamily.

It localises to the cell inner membrane. It carries out the reaction heme b + (2E,6E)-farnesyl diphosphate + H2O = Fe(II)-heme o + diphosphate. It functions in the pathway porphyrin-containing compound metabolism; heme O biosynthesis; heme O from protoheme: step 1/1. Its function is as follows. Converts heme B (protoheme IX) to heme O by substitution of the vinyl group on carbon 2 of heme B porphyrin ring with a hydroxyethyl farnesyl side group. This is Protoheme IX farnesyltransferase 2 from Pseudomonas entomophila (strain L48).